Reading from the N-terminus, the 259-residue chain is Type III pantothenate kinase (259 aa).

Asp6 to Leu13 is a binding site for ATP. Gly108 to Arg111 lines the substrate pocket. Catalysis depends on Asp110, which acts as the Proton acceptor. Position 130 (Asp130) interacts with K(+). Thr133 provides a ligand contact to ATP. Thr185 provides a ligand contact to substrate.

It belongs to the type III pantothenate kinase family. Homodimer. NH4(+) is required as a cofactor. The cofactor is K(+).

The protein localises to the cytoplasm. The enzyme catalyses (R)-pantothenate + ATP = (R)-4'-phosphopantothenate + ADP + H(+). The protein operates within cofactor biosynthesis; coenzyme A biosynthesis; CoA from (R)-pantothenate: step 1/5. Catalyzes the phosphorylation of pantothenate (Pan), the first step in CoA biosynthesis. This chain is Type III pantothenate kinase, found in Maricaulis maris (strain MCS10) (Caulobacter maris).